Here is a 672-residue protein sequence, read N- to C-terminus: Transmembrane 9 superfamily member 2 (672 aa).

The signal sequence occupies residues 1–18 (MKRGVWLLIYCYATLTKG). The Extracellular segment spans residues 19-307 (FSLPGLSPTT…DKYLHIYDPQ (289 aa)). The chain crosses the membrane as a helical span at residues 308 to 328 (IQWFSLINFSVIVILLSSVVM). The Cytoplasmic segment spans residues 329 to 383 (HSLLRALKSDLARYNELNLDNEFHEDSGWKLGHGDVFRTPSKSMLLSILVGSGMQ). A helical transmembrane segment spans residues 384 to 404 (LFLMVMCSIFFAAVGLVSPVS). The Extracellular segment spans residues 405-410 (RGSLPT). The helical transmembrane segment at 411–431 (VMFVLYALFGFVGSYASMGVY) threads the bilayer. At 432 to 447 (KFFRGPYWKANMILTP) the chain is on the cytoplasmic side. Residues 448 to 468 (ILLPGAIFLLIVIMNFFLLFA) form a helical membrane-spanning segment. At 469 to 479 (HSSGVIPARSL) the chain is on the extracellular side. A helical membrane pass occupies residues 480 to 500 (FFIILLWFLVSVPLSFAGSIV). The Cytoplasmic portion of the chain corresponds to 501-532 (AHKQCNWDEHPTKTNQIARQIPYQPWYLRTAQ). Residues 533-553 (ATLIAGIFSFGSIAVELYFIY) traverse the membrane as a helical segment. At 554 to 565 (SSLWFNKIFYMF) the chain is on the extracellular side. A helical transmembrane segment spans residues 566–586 (GFLLFSFLLLTLTTSLVTILI). Residues 587-601 (TYYSLCLENWLWQWR) are Cytoplasmic-facing. Residues 602–622 (SFIIGGLGCSIYTFIHSILFT) form a helical membrane-spanning segment. Residues 623–628 (KFKLGG) are Extracellular-facing. The chain crosses the membrane as a helical span at residues 629 to 649 (VITVVLYLGYSLIISALCCVV). The Cytoplasmic portion of the chain corresponds to 650-672 (TGAIGFFSSMFFIRKIYSAIKVE).

Belongs to the nonaspanin (TM9SF) (TC 9.A.2) family.

It is found in the vacuole membrane. Its function is as follows. With EMP70 and TMN3, plays a critical role in the late stages of a nutrient-controlled pathway notably regulating FLO11 gene expression. Acts downstream of RAS2 and TOR. Essential for cell adhesion and filamentous growth. May play a role as effector of cellular copper homeostasis. The chain is Transmembrane 9 superfamily member 2 (TMN2) from Saccharomyces cerevisiae (strain ATCC 204508 / S288c) (Baker's yeast).